The sequence spans 290 residues: 4-hydroxy-tetrahydrodipicolinate synthase (290 aa).

Thr-44 contributes to the pyruvate binding site. The active-site Proton donor/acceptor is Tyr-132. Lys-160 acts as the Schiff-base intermediate with substrate in catalysis. Ile-202 provides a ligand contact to pyruvate.

It belongs to the DapA family. Homotetramer; dimer of dimers.

Its subcellular location is the cytoplasm. The enzyme catalyses L-aspartate 4-semialdehyde + pyruvate = (2S,4S)-4-hydroxy-2,3,4,5-tetrahydrodipicolinate + H2O + H(+). Its pathway is amino-acid biosynthesis; L-lysine biosynthesis via DAP pathway; (S)-tetrahydrodipicolinate from L-aspartate: step 3/4. In terms of biological role, catalyzes the condensation of (S)-aspartate-beta-semialdehyde [(S)-ASA] and pyruvate to 4-hydroxy-tetrahydrodipicolinate (HTPA). The chain is 4-hydroxy-tetrahydrodipicolinate synthase from Legionella pneumophila subsp. pneumophila (strain Philadelphia 1 / ATCC 33152 / DSM 7513).